The sequence spans 112 residues: UPF0342 protein SSU05_1260 (112 aa).

The protein belongs to the UPF0342 family.

The sequence is that of UPF0342 protein SSU05_1260 from Streptococcus suis (strain 05ZYH33).